Reading from the N-terminus, the 237-residue chain is Nodulation protein NolA (237 aa).

An HTH merR-type domain is found at 10 to 79 (RWRIGELAGA…LQEIRRAMDG (70 aa)). The segment at residues 13 to 32 (IGELAGATGVTVRTLHHYEH) is a DNA-binding region (H-T-H motif).

Its function is as follows. Involved in genotype-specific nodulation of soybeans. The protein is Nodulation protein NolA (nolA) of Bradyrhizobium sp. (strain NC92).